We begin with the raw amino-acid sequence, 122 residues long: Large ribosomal subunit protein uL18 (122 aa).

The interval 1-25 is disordered; it reads MSQISRKQQTQKRHRRLRRHITGTS. Basic residues predominate over residues 9–21; that stretch reads QTQKRHRRLRRHI.

The protein belongs to the universal ribosomal protein uL18 family. In terms of assembly, part of the 50S ribosomal subunit; part of the 5S rRNA/L5/L18/L25 subcomplex. Contacts the 5S and 23S rRNAs.

Its function is as follows. This is one of the proteins that bind and probably mediate the attachment of the 5S RNA into the large ribosomal subunit, where it forms part of the central protuberance. The protein is Large ribosomal subunit protein uL18 of Synechococcus sp. (strain CC9605).